A 133-amino-acid chain; its full sequence is ATP synthase epsilon chain (133 aa).

Belongs to the ATPase epsilon chain family. F-type ATPases have 2 components, CF(1) - the catalytic core - and CF(0) - the membrane proton channel. CF(1) has five subunits: alpha(3), beta(3), gamma(1), delta(1), epsilon(1). CF(0) has three main subunits: a, b and c.

It is found in the cell inner membrane. Its function is as follows. Produces ATP from ADP in the presence of a proton gradient across the membrane. This Paramagnetospirillum magneticum (strain ATCC 700264 / AMB-1) (Magnetospirillum magneticum) protein is ATP synthase epsilon chain.